A 759-amino-acid chain; its full sequence is MPNLLSRNPFHGHHNDHHHDRENSSNNPPQLIRSSKSFLNFIGRKQSNDSLRSEKSTDSMKSTTTTTNYTTTNLNNNTHSHSNATSISTNNYNNNYETNHHHNISHGLHDYTSPASPKQTHSMAELKRFFRPSVNKKLSMSQLRSKKHSTHSPPPSKSTSTVNLNNHYRAQHPHGFTDHYAHTQSAIPPSTDSILSLSNNINIYHDDCILAQKYGKLGKLLGSGAGGSVKVLVRPTDGATFAVKEFRPRKPNESVKEYAKKCTAEFCIGSTLHHPNVIETVDVFSDSKQNKYYEVMEYCPIDFFAVVMTGKMSRGEINCCLKQLTEGVKYLHSMGLAHRDLKLDNCVMTSQGILKLIDFGSAVVFRYPFEDGVTMAHGIVGSDPYLAPEVITSTKSYDPQCVDIWSIGIIYCCMVLKRFPWKAPRDSDDNFRLYCMPDDIEHDYVESARHHEELLKERKEKRQRFLNHSDCSAINQQQPAHESNLKTVQNQVPNTPASIQGKSDNKPDIVEEETEENKEDDSNNDKESTPDNDKESTIDIKISKNENKSTVVSANPKKVDADADADCDANGDSNGRVDCKANSDCNDKTDCNANNDCSNESDCNAKVDTNVNTAANANPDMVPQNNPQQQQQQQQQQQQQQQQQQQQHHHHQHQNQDKAHSIASDNKSSQQHRGPHHKKIIHGPYRLLRLLPHASRPIMSRILQVDPKKRATLDDIFNDEWFAAIAACTMDSKNKVIRAPGHHHTLVREENAHLETYKV.

Residues 1 to 32 (MPNLLSRNPFHGHHNDHHHDRENSSNNPPQLI) form a disordered region. Phosphoserine is present on S37. A disordered region spans residues 45-162 (KQSNDSLRSE…PPPSKSTSTV (118 aa)). Low complexity predominate over residues 59–97 (SMKSTTTTTNYTTTNLNNNTHSHSNATSISTNNYNNNYE). The segment covering 113–122 (SPASPKQTHS) has biased composition (polar residues). The Protein kinase domain maps to 215-722 (GKLGKLLGSG…LDDIFNDEWF (508 aa)). ATP is bound by residues 221–229 (LGSGAGGSV) and K244. The Proton acceptor role is filled by D340. S382 and S472 each carry phosphoserine. A compositionally biased stretch (polar residues) spans 493–502 (PNTPASIQGK). Disordered regions lie at residues 493–578 (PNTP…GRVD) and 614–682 (AANA…KIIH). T495 carries the post-translational modification Phosphothreonine. The residue at position 498 (S498) is a Phosphoserine. The span at 510–519 (VEEETEENKE) shows a compositional bias: acidic residues. Over residues 520–547 (DDSNNDKESTPDNDKESTIDIKISKNEN) the composition is skewed to basic and acidic residues. Residues 614 to 646 (AANANPDMVPQNNPQQQQQQQQQQQQQQQQQQQ) are compositionally biased toward low complexity. Positions 663 to 672 (ASDNKSSQQH) are enriched in polar residues.

This sequence belongs to the protein kinase superfamily. Ser/Thr protein kinase family.

Its subcellular location is the cytoplasm. It carries out the reaction L-seryl-[protein] + ATP = O-phospho-L-seryl-[protein] + ADP + H(+). The enzyme catalyses L-threonyl-[protein] + ATP = O-phospho-L-threonyl-[protein] + ADP + H(+). Its function is as follows. Involved in regulating the activity of the plasma membrane proton pump PMA1. The sequence is that of Serine/threonine-protein kinase HRK1 (HRK1) from Saccharomyces cerevisiae (strain ATCC 204508 / S288c) (Baker's yeast).